Reading from the N-terminus, the 222-residue chain is Octanoyltransferase (222 aa).

Residues 35-210 (ETTPDELWLV…EFVHLLGYPK (176 aa)) form the BPL/LPL catalytic domain. Residues 74-81 (RGGQVTYH), 141-143 (SLG), and 154-156 (GLA) each bind substrate. Residue C172 is the Acyl-thioester intermediate of the active site.

It belongs to the LipB family.

It localises to the cytoplasm. The catalysed reaction is octanoyl-[ACP] + L-lysyl-[protein] = N(6)-octanoyl-L-lysyl-[protein] + holo-[ACP] + H(+). It functions in the pathway protein modification; protein lipoylation via endogenous pathway; protein N(6)-(lipoyl)lysine from octanoyl-[acyl-carrier-protein]: step 1/2. Catalyzes the transfer of endogenously produced octanoic acid from octanoyl-acyl-carrier-protein onto the lipoyl domains of lipoate-dependent enzymes. Lipoyl-ACP can also act as a substrate although octanoyl-ACP is likely to be the physiological substrate. In Serratia proteamaculans (strain 568), this protein is Octanoyltransferase.